An 85-amino-acid chain; its full sequence is uncharacterized protein (85 aa).

To A.fulgidus AF_0255 and AF_1363.

This is an uncharacterized protein from Archaeoglobus fulgidus (strain ATCC 49558 / DSM 4304 / JCM 9628 / NBRC 100126 / VC-16).